Reading from the N-terminus, the 588-residue chain is Protein disulfide-isomerase-like protein of the testis (588 aa).

The signal sequence occupies residues Met-1 to Gly-20. N-linked (GlcNAc...) asparagine glycosylation is found at Asn-55, Asn-157, and Asn-337. In terms of domain architecture, Thioredoxin spans Pro-385–Asp-448. Composition is skewed to basic and acidic residues over residues Ile-531 to Lys-542, Ser-549 to Ala-567, and Glu-574 to Leu-588. A disordered region spans residues Ile-531 to Leu-588. The Prevents secretion from ER motif lies at Lys-585–Leu-588.

Belongs to the protein disulfide isomerase family. As to quaternary structure, homodimer. The homodimer is not disulfide-linked. Interacts with CLGN and ERO1A. N-glycosylated. As to expression, testis-specific (at protein level).

It localises to the endoplasmic reticulum. Probable redox-inactive chaperone involved in spermatogenesis. The chain is Protein disulfide-isomerase-like protein of the testis (Pdilt) from Mus musculus (Mouse).